A 229-amino-acid polypeptide reads, in one-letter code: Heptaprenylglyceryl phosphate synthase (229 aa).

Position 12 (Lys12) interacts with sn-glycerol 1-phosphate. Residues Asp14 and Ser40 each contribute to the Mg(2+) site. Sn-glycerol 1-phosphate contacts are provided by residues Tyr159 to Gly164, Gly189, and Gly209 to Asn210.

This sequence belongs to the GGGP/HepGP synthase family. Group I subfamily. Homodimer. The cofactor is Mg(2+).

It catalyses the reaction sn-glycerol 1-phosphate + all-trans-heptaprenyl diphosphate = 3-heptaprenyl-sn-glycero-1-phosphate + diphosphate. The protein operates within membrane lipid metabolism; glycerophospholipid metabolism. Prenyltransferase that catalyzes in vivo the transfer of the heptaprenyl moiety of heptaprenyl pyrophosphate (HepPP; 35 carbon atoms) to the C3 hydroxyl of sn-glycerol-1-phosphate (G1P), producing heptaprenylglyceryl phosphate (HepGP). This reaction is an ether-bond-formation step in the biosynthesis of archaea-type G1P-based membrane lipids found in Bacillales. This Bacillus cytotoxicus (strain DSM 22905 / CIP 110041 / 391-98 / NVH 391-98) protein is Heptaprenylglyceryl phosphate synthase.